A 135-amino-acid chain; its full sequence is Large ribosomal subunit protein eL27z (135 aa).

The protein belongs to the eukaryotic ribosomal protein eL27 family.

This is Large ribosomal subunit protein eL27z (RPL27A) from Arabidopsis thaliana (Mouse-ear cress).